Reading from the N-terminus, the 692-residue chain is MAREFSLENTRNIGIMAHIDAGKTTTTERILFYTGRVHKIGETHEGSATMDWMEQEQERGITITSAATTAQWKGHRINIIDTPGHVDFTVEVERSLRVLDGAITVLDAQSGVEPQTETVWRQATTYGVPRIVFVNKMDKIGADFLYAVKTLHDRLQANAYPVQLPIGAEDQFTGIIDLVEMCAYHYHDDLGKNIERIEIPEDYRDLAEEYHGKLIEAVAELDEELMMKYLEGEEITKEELKAAIRKATINVEFYPVFCGSAFKNKGVQLLLDGVVDYLPSPLDIPAIRGIIPDTEEEVAREARDDAPFSALAFKIMTDPYVGKLTFFRVYSGTLDSGSYVMNSTKRKRERIGRLLQMHANHRQEISTVYAGDIAAAVGLKETTTGDTLCDEKNLVILESMQFPEPVISVAIEPKSKADQDKMGQALQKLQEEDPTFRAHTDPETGQTIISGMGELHLDIIVDRMRREFKVEANVGAPQVAYRETFRQSAQVEGKFIRQSGGRGQYGHVWIEFTPNERGKGFEFENAIVGGVVPKEYVPAVQAGLEEAMQNGVLAGYPVVDIKAKLFDGSYHDVDSSEMAFKIAASMALKNAAAKCEPVLLEPIMKVEVVIPEEYLGDIMGDITSRRGRVEGMEARGNAQVVRAMVPMAEMFGYATSLRSNTQGRGTFSMVFDHYEEVPKNIADEIIKKNKGE.

The tr-type G domain occupies 8–282; that stretch reads ENTRNIGIMA…GVVDYLPSPL (275 aa). GTP is bound by residues 17–24, 81–85, and 135–138; these read AHIDAGKT, DTPGH, and NKMD.

This sequence belongs to the TRAFAC class translation factor GTPase superfamily. Classic translation factor GTPase family. EF-G/EF-2 subfamily.

It localises to the cytoplasm. Functionally, catalyzes the GTP-dependent ribosomal translocation step during translation elongation. During this step, the ribosome changes from the pre-translocational (PRE) to the post-translocational (POST) state as the newly formed A-site-bound peptidyl-tRNA and P-site-bound deacylated tRNA move to the P and E sites, respectively. Catalyzes the coordinated movement of the two tRNA molecules, the mRNA and conformational changes in the ribosome. The chain is Elongation factor G from Geobacillus thermodenitrificans (strain NG80-2).